The chain runs to 186 residues: UPF0461 protein C5orf24 homolog (186 aa).

The segment covering 60–69 (NETHLQTSTS) has biased composition (polar residues). Residues 60-140 (NETHLQTSTS…AAGYKVSPGR (81 aa)) are disordered. The span at 78–92 (LKKKKNLGRSGKRGR) shows a compositional bias: basic residues. Positions 94–107 (SGTTKSAGYRTSTG) are enriched in polar residues.

Belongs to the UPF0461 family.

The sequence is that of UPF0461 protein C5orf24 homolog from Xenopus tropicalis (Western clawed frog).